The primary structure comprises 209 residues: Small ribosomal subunit protein uS4 (209 aa).

Residues 1 to 13 show a composition bias toward basic residues; the sequence is MSTKSRTRSKTRL. 2 disordered regions span residues 1 to 20 and 28 to 49; these read MSTKSRTRSKTRLSRALGIP and YLEKRPYAPGEHGRSKRKQDSD. One can recognise an S4 RNA-binding domain in the interval 95–160; the sequence is QRLDALVVRS…TEPFQVAAAG (66 aa).

Belongs to the universal ribosomal protein uS4 family. As to quaternary structure, part of the 30S ribosomal subunit. Contacts protein S5. The interaction surface between S4 and S5 is involved in control of translational fidelity.

One of the primary rRNA binding proteins, it binds directly to 16S rRNA where it nucleates assembly of the body of the 30S subunit. In terms of biological role, with S5 and S12 plays an important role in translational accuracy. The chain is Small ribosomal subunit protein uS4 from Clavibacter sepedonicus (Clavibacter michiganensis subsp. sepedonicus).